Consider the following 201-residue polypeptide: Probable GTP-binding protein EngB (201 aa).

An EngB-type G domain is found at 23–196 (TGPEIALAGR…HEAVEEILSM (174 aa)). Residues 31-38 (GRSNVGKS), 58-62 (GKTQM), 76-79 (DLPG), 143-146 (TKAD), and 175-177 (YSA) contribute to the GTP site. Mg(2+)-binding residues include serine 38 and threonine 60.

It belongs to the TRAFAC class TrmE-Era-EngA-EngB-Septin-like GTPase superfamily. EngB GTPase family. Mg(2+) is required as a cofactor.

Necessary for normal cell division and for the maintenance of normal septation. This Desulfitobacterium hafniense (strain DSM 10664 / DCB-2) protein is Probable GTP-binding protein EngB.